The sequence spans 145 residues: Small ribosomal subunit protein uS17c (145 aa).

The N-terminal 36 residues, 1–36 (MLLTTPFVSSPVRVQGNGGSGASPWAGAATALRIQA), are a transit peptide targeting the chloroplast. A disordered region spans residues 101 to 145 (KTKHFLAVPLPPRDTRRKSQLLPPLQSQSQSQDQDQPPTPPPSSD). The span at 120–136 (QLLPPLQSQSQSQDQDQ) shows a compositional bias: low complexity.

This sequence belongs to the universal ribosomal protein uS17 family. Part of the 30S ribosomal subunit.

Its subcellular location is the plastid. The protein resides in the chloroplast. Functionally, one of the primary rRNA binding proteins, it binds specifically to the 5'-end of 16S ribosomal RNA. This Oryza sativa subsp. japonica (Rice) protein is Small ribosomal subunit protein uS17c (RPS17).